The primary structure comprises 383 residues: Dual-specificity RNA methyltransferase RlmN (383 aa).

Residue glutamate 94 is the Proton acceptor of the active site. The Radical SAM core domain maps to 100 to 339 (DGDRATLCVS…VTVRRTRGDD (240 aa)). Cysteine 107 and cysteine 344 are joined by a disulfide. [4Fe-4S] cluster-binding residues include cysteine 114, cysteine 118, and cysteine 121. S-adenosyl-L-methionine is bound by residues 168–169 (GE), serine 200, 222–224 (SLH), and asparagine 301. Catalysis depends on cysteine 344, which acts as the S-methylcysteine intermediate.

Belongs to the radical SAM superfamily. RlmN family. The cofactor is [4Fe-4S] cluster.

It localises to the cytoplasm. It carries out the reaction adenosine(2503) in 23S rRNA + 2 reduced [2Fe-2S]-[ferredoxin] + 2 S-adenosyl-L-methionine = 2-methyladenosine(2503) in 23S rRNA + 5'-deoxyadenosine + L-methionine + 2 oxidized [2Fe-2S]-[ferredoxin] + S-adenosyl-L-homocysteine. It catalyses the reaction adenosine(37) in tRNA + 2 reduced [2Fe-2S]-[ferredoxin] + 2 S-adenosyl-L-methionine = 2-methyladenosine(37) in tRNA + 5'-deoxyadenosine + L-methionine + 2 oxidized [2Fe-2S]-[ferredoxin] + S-adenosyl-L-homocysteine. In terms of biological role, specifically methylates position 2 of adenine 2503 in 23S rRNA and position 2 of adenine 37 in tRNAs. m2A2503 modification seems to play a crucial role in the proofreading step occurring at the peptidyl transferase center and thus would serve to optimize ribosomal fidelity. The protein is Dual-specificity RNA methyltransferase RlmN of Aliivibrio salmonicida (strain LFI1238) (Vibrio salmonicida (strain LFI1238)).